The primary structure comprises 273 residues: Phosphate import ATP-binding protein PstB (273 aa).

The region spanning 27–268 is the ABC transporter domain; sequence VTVRDLNFYY…PSDRRTQDYI (242 aa). 59 to 66 is an ATP binding site; that stretch reads GPSGCGKS.

It belongs to the ABC transporter superfamily. Phosphate importer (TC 3.A.1.7) family. As to quaternary structure, the complex is composed of two ATP-binding proteins (PstB), two transmembrane proteins (PstC and PstA) and a solute-binding protein (PstS).

It localises to the cell inner membrane. The enzyme catalyses phosphate(out) + ATP + H2O = ADP + 2 phosphate(in) + H(+). Functionally, part of the ABC transporter complex PstSACB involved in phosphate import. Responsible for energy coupling to the transport system. The sequence is that of Phosphate import ATP-binding protein PstB from Rhodopseudomonas palustris (strain ATCC BAA-98 / CGA009).